Consider the following 381-residue polypeptide: Chaperone protein DnaJ (381 aa).

The region spanning 5 to 70 is the J domain; the sequence is DFYEVLGVGR…QKKAAYDQYG (66 aa). A CR-type zinc finger spans residues 136 to 214; the sequence is GCSKEIEVPT…CHGQGRKQKT (79 aa). Cys-149, Cys-152, Cys-166, Cys-169, Cys-188, Cys-191, Cys-202, and Cys-205 together coordinate Zn(2+). 4 CXXCXGXG motif repeats span residues 149-156, 166-173, 188-195, and 202-209; these read CDACDGSG, CGTCHGHG, CPTCHGKG, and CNVCHGQG.

This sequence belongs to the DnaJ family. As to quaternary structure, homodimer. Zn(2+) serves as cofactor.

It localises to the cytoplasm. Functionally, participates actively in the response to hyperosmotic and heat shock by preventing the aggregation of stress-denatured proteins and by disaggregating proteins, also in an autonomous, DnaK-independent fashion. Unfolded proteins bind initially to DnaJ; upon interaction with the DnaJ-bound protein, DnaK hydrolyzes its bound ATP, resulting in the formation of a stable complex. GrpE releases ADP from DnaK; ATP binding to DnaK triggers the release of the substrate protein, thus completing the reaction cycle. Several rounds of ATP-dependent interactions between DnaJ, DnaK and GrpE are required for fully efficient folding. Also involved, together with DnaK and GrpE, in the DNA replication of plasmids through activation of initiation proteins. This Vibrio cholerae serotype O1 (strain ATCC 39541 / Classical Ogawa 395 / O395) protein is Chaperone protein DnaJ.